A 451-amino-acid polypeptide reads, in one-letter code: Plasmepsin III (451 aa).

Residues 1-37 are Cytoplasmic-facing; it reads MNLTIKEEDFTNTFMKNEESFNTFRVTKVKRWNAKRL. Residues 1 to 123 constitute a propeptide that is removed on maturation; the sequence is MNLTIKEEDF…KGLTKKSYLG (123 aa). Residues 38–58 form a helical; Signal-anchor for type II membrane protein membrane-spanning segment; the sequence is FKILFVTVFIVLAGGFSYYIF. The Lumenal segment spans residues 59–451; the sequence is ENFVFQKNRK…TVGFALAKNL (393 aa). Residues 139-446 form the Peptidase A1 domain; that stretch reads SFGEAKLGDN…DYDNHTVGFA (308 aa). 2 disulfides stabilise this stretch: cysteine 170–cysteine 175 and cysteine 372–cysteine 408.

This sequence belongs to the peptidase A1 family. Probable homodimer; in the zymogen form. Monomer; in the active form. Acidification disrupts homodimerization. Component of the hemozoin formation complex (HFC) composed of falcipains FP2A and/or FP2B, plasmepsins PMII, PMIII/HAP and PMIV, heme detoxifying protein HDP and falcilysin FLN. The HFC complex is involved in hemoglobin degradation and detoxification of heme in the food vacuole during the asexual blood stage. In terms of processing, proteolytically cleaved into the soluble active mature form by cysteine proteases in the digestive vacuole of trophozoites. Proteolysis requires an acidic environment. Transprocessing may serve as an alternate activation system.

The protein localises to the membrane. It is found in the vacuole lumen. The enzyme catalyses Hydrolysis of the bonds linking certain hydrophobic residues in hemoglobin or globin. Also cleaves small molecules substrates such as Ala-Leu-Glu-Arg-Thr-Phe-|-Phe(NO2)-Ser-Phe-Pro-Thr.. Dimerization causes loss of catalytic activity. Inhibited by pepstatin A. Inhibited by Zn(2+). Its function is as follows. During the asexual blood stage, catalyzes the cleavage of denatured host hemoglobin (Hb) or globins. Digestion of host Hb is an essential step which provides the parasite with amino acids for protein synthesis, and regulates osmolarity. This chain is Plasmepsin III, found in Plasmodium falciparum (isolate 3D7).